The primary structure comprises 266 residues: 3-methyl-2-oxobutanoate hydroxymethyltransferase (266 aa).

Mg(2+) is bound by residues Asp-43 and Asp-82. 3-methyl-2-oxobutanoate-binding positions include 43 to 44, Asp-82, and Lys-110; that span reads DS. Glu-112 provides a ligand contact to Mg(2+). Catalysis depends on Glu-179, which acts as the Proton acceptor.

Belongs to the PanB family. In terms of assembly, homodecamer; pentamer of dimers. Requires Mg(2+) as cofactor.

Its subcellular location is the cytoplasm. The catalysed reaction is 3-methyl-2-oxobutanoate + (6R)-5,10-methylene-5,6,7,8-tetrahydrofolate + H2O = 2-dehydropantoate + (6S)-5,6,7,8-tetrahydrofolate. Its pathway is cofactor biosynthesis; (R)-pantothenate biosynthesis; (R)-pantoate from 3-methyl-2-oxobutanoate: step 1/2. Catalyzes the reversible reaction in which hydroxymethyl group from 5,10-methylenetetrahydrofolate is transferred onto alpha-ketoisovalerate to form ketopantoate. This is 3-methyl-2-oxobutanoate hydroxymethyltransferase from Psychrobacter arcticus (strain DSM 17307 / VKM B-2377 / 273-4).